We begin with the raw amino-acid sequence, 185 residues long: F-box protein At1g61340 (185 aa).

An F-box domain is found at Ser78–Ser126.

In Arabidopsis thaliana (Mouse-ear cress), this protein is F-box protein At1g61340.